Here is a 357-residue protein sequence, read N- to C-terminus: 3-dehydroquinate synthase (357 aa).

NAD(+)-binding positions include 69–74 (DGEQFK), 103–107 (GVVGD), 127–128 (TT), K140, K149, and 167–170 (CLQT). Positions 182, 245, and 262 each coordinate Zn(2+).

Belongs to the sugar phosphate cyclases superfamily. Dehydroquinate synthase family. Co(2+) is required as a cofactor. Requires Zn(2+) as cofactor. It depends on NAD(+) as a cofactor.

The protein resides in the cytoplasm. It catalyses the reaction 7-phospho-2-dehydro-3-deoxy-D-arabino-heptonate = 3-dehydroquinate + phosphate. Its pathway is metabolic intermediate biosynthesis; chorismate biosynthesis; chorismate from D-erythrose 4-phosphate and phosphoenolpyruvate: step 2/7. Functionally, catalyzes the conversion of 3-deoxy-D-arabino-heptulosonate 7-phosphate (DAHP) to dehydroquinate (DHQ). This is 3-dehydroquinate synthase from Idiomarina loihiensis (strain ATCC BAA-735 / DSM 15497 / L2-TR).